Here is a 335-residue protein sequence, read N- to C-terminus: Fimbrial adhesin PapGIII (335 aa).

The first 21 residues, 1-21, serve as a signal peptide directing secretion; it reads MKKWLPAFLFLSLSGCNDALA.

The protein belongs to the adhesin PapG family.

Its subcellular location is the secreted. It is found in the fimbrium. Functionally, tip adhesin component of type P pili that binds preferentially to Gal-alpha(1-4)-Gal-containing glycolipids such as globoside. This tip is common in E.coli strains that cause human cystitis, but rare in pyelonephritic isolates. The polypeptide is Fimbrial adhesin PapGIII (Escherichia coli).